Here is a 612-residue protein sequence, read N- to C-terminus: DNA damage checkpoint protein 1 (612 aa).

At Ser436 the chain carries Phosphoserine. The segment at 576-612 (GLLNSQNDTSNHKKQDNKEMEDGLGLTQVEKPRGIFD) is disordered. The segment covering 585–596 (SNHKKQDNKEME) has biased composition (basic and acidic residues).

Belongs to the DDC1 family. In terms of assembly, component of the checkpoint clamp complex composed of DDC1, MEC3 and RAD17. The interaction with MEC3 is performed in a RAD17-dependent manner. The checkpoint clamp complex loads onto DNA in an ATP-dependent manner through its interaction with the RFC-RAD4 checkpoint clamp loader complex. Interacts with the DNA polymerase zeta subunit REV7 and DPB11. Phosphorylated during cell cycle S-phase and in response to DNA damage. This phosphorylation is MEC14 dependent. Also hosphorylated by CDC28.

It is found in the cytoplasm. It localises to the nucleus. Its function is as follows. Component of the checkpoint clamp complex involved in the surveillance mechanism that allows the DNA repair pathways to act to restore the integrity of the DNA prior to DNA synthesis or separation of the replicated chromosomes. Associates with sites of DNA damage and modulates the MEC1 signaling pathway and the activation of RAD53 in response to DNA damage at phase G1. The complex also physically regulates DNA polymerase zeta-dependent mutagenesis by controlling the access of polymerase zeta to damaged DNA. The sequence is that of DNA damage checkpoint protein 1 (DDC1) from Saccharomyces cerevisiae (strain ATCC 204508 / S288c) (Baker's yeast).